Consider the following 568-residue polypeptide: Proline--tRNA ligase (568 aa).

Belongs to the class-II aminoacyl-tRNA synthetase family. ProS type 1 subfamily. As to quaternary structure, homodimer.

The protein resides in the cytoplasm. It carries out the reaction tRNA(Pro) + L-proline + ATP = L-prolyl-tRNA(Pro) + AMP + diphosphate. Catalyzes the attachment of proline to tRNA(Pro) in a two-step reaction: proline is first activated by ATP to form Pro-AMP and then transferred to the acceptor end of tRNA(Pro). As ProRS can inadvertently accommodate and process non-cognate amino acids such as alanine and cysteine, to avoid such errors it has two additional distinct editing activities against alanine. One activity is designated as 'pretransfer' editing and involves the tRNA(Pro)-independent hydrolysis of activated Ala-AMP. The other activity is designated 'posttransfer' editing and involves deacylation of mischarged Ala-tRNA(Pro). The misacylated Cys-tRNA(Pro) is not edited by ProRS. The protein is Proline--tRNA ligase of Listeria monocytogenes serovar 1/2a (strain ATCC BAA-679 / EGD-e).